Consider the following 291-residue polypeptide: MKRIALFLATNLAVMIVFSIVLNIVYAVTGIQQGSLSGLLVMAVLFGFGGSLISLMMSKSMALRSVGGEVIEQPRNETEHWLLETVSRQAQQVGIGMPTVAIYDSPDMNAFATGAKRDDSLVAVSTGLLHSMTRDEAEAVLAHEVSHIANGDMITMTLMQGVVNTFVIFLSRMIANAVSGFTSSDEEGEGEGGSFMTYFIVSTVLELAFGFLASFLTMWFSRHREFHADAGAAQLVGKQKMIAALERLRMGQESQLEGSMMAFGINGKKSLTELLMSHPPLEKRIDALRQM.

The next 2 helical transmembrane spans lie at 4–24 and 36–56; these read IALFLATNLAVMIVFSIVLNI and LSGLLVMAVLFGFGGSLISLM. Position 143 (H143) interacts with Zn(2+). E144 is an active-site residue. Residue H147 coordinates Zn(2+). A run of 2 helical transmembrane segments spans residues 151 to 171 and 199 to 219; these read GDMITMTLMQGVVNTFVIFLS and FIVSTVLELAFGFLASFLTMW. A Zn(2+)-binding site is contributed by E225.

It belongs to the peptidase M48B family. Zn(2+) serves as cofactor.

The protein resides in the cell inner membrane. The sequence is that of Protease HtpX from Aliivibrio fischeri (strain ATCC 700601 / ES114) (Vibrio fischeri).